The chain runs to 62 residues: UPF0434 protein Fphi_1862 (62 aa).

This sequence belongs to the UPF0434 family.

This Francisella philomiragia subsp. philomiragia (strain ATCC 25017 / CCUG 19701 / FSC 153 / O#319-036) protein is UPF0434 protein Fphi_1862.